Consider the following 308-residue polypeptide: Pseudouridine-5'-phosphate glycosidase (308 aa).

Glutamate 29 (proton donor) is an active-site residue. Residues lysine 90 and valine 110 each contribute to the substrate site. Aspartate 142 is a Mn(2+) binding site. 144 to 146 contacts substrate; sequence SSD. The active-site Nucleophile is lysine 163.

Belongs to the pseudouridine-5'-phosphate glycosidase family. Homotrimer. Mn(2+) serves as cofactor.

The catalysed reaction is D-ribose 5-phosphate + uracil = psi-UMP + H2O. Catalyzes the reversible cleavage of pseudouridine 5'-phosphate (PsiMP) to ribose 5-phosphate and uracil. Functions biologically in the cleavage direction, as part of a pseudouridine degradation pathway. This chain is Pseudouridine-5'-phosphate glycosidase, found in Serratia proteamaculans (strain 568).